Consider the following 266-residue polypeptide: bZIP transcription factor 12 (266 aa).

The bZIP domain occupies 184–248 (AMQRQKRMIK…KELKEMVVPV (65 aa)). The basic motif stretch occupies residues 187–205 (RQKRMIKNRESAARSRERK). Residues 202 to 244 (RERKQAYIAELESLVTQLEEENAKMFKEQEEQHQKRLKELKEM) are a coiled coil. Positions 212-219 (LESLVTQL) are leucine-zipper.

Its subcellular location is the nucleus. Its function is as follows. Transcription activator that binds to the ABA-responsive elements (ABREs) in vitro. Involved in abiotic stress responses and abscisic acid (ABA) signaling. Involved in the signaling pathway that induces growth inhibition in response to D-allose. This chain is bZIP transcription factor 12, found in Oryza sativa subsp. japonica (Rice).